A 174-amino-acid polypeptide reads, in one-letter code: Co-chaperone protein HscB homolog (174 aa).

A J domain is found at 2–74; the sequence is NYFELFKFSP…IRRAEHLLSL (73 aa).

This sequence belongs to the HscB family. In terms of assembly, interacts with HscA and stimulates its ATPase activity.

Functionally, co-chaperone involved in the maturation of iron-sulfur cluster-containing proteins. Seems to help targeting proteins to be folded toward HscA. The protein is Co-chaperone protein HscB homolog of Shewanella sp. (strain W3-18-1).